The sequence spans 360 residues: Phenylalanine--tRNA ligase alpha subunit (360 aa).

Glutamate 264 is a binding site for Mg(2+).

Belongs to the class-II aminoacyl-tRNA synthetase family. Phe-tRNA synthetase alpha subunit type 1 subfamily. In terms of assembly, tetramer of two alpha and two beta subunits. It depends on Mg(2+) as a cofactor.

The protein resides in the cytoplasm. It carries out the reaction tRNA(Phe) + L-phenylalanine + ATP = L-phenylalanyl-tRNA(Phe) + AMP + diphosphate + H(+). This is Phenylalanine--tRNA ligase alpha subunit from Streptomyces avermitilis (strain ATCC 31267 / DSM 46492 / JCM 5070 / NBRC 14893 / NCIMB 12804 / NRRL 8165 / MA-4680).